A 306-amino-acid polypeptide reads, in one-letter code: Palmitoyl-protein thioesterase ABHD10, mitochondrial (306 aa).

The transit peptide at Met1 to Lys52 directs the protein to the mitochondrion. Residues Ile78–Thr177 enclose the AB hydrolase-1 domain. Residues Ser152, Asp249, and His279 each act as charge relay system in the active site.

The protein belongs to the AB hydrolase superfamily.

It localises to the mitochondrion. It carries out the reaction S-hexadecanoyl-L-cysteinyl-[protein] + H2O = L-cysteinyl-[protein] + hexadecanoate + H(+). It catalyses the reaction mycophenolic acid O-acyl-beta-D-glucuronide + H2O = mycophenolate + D-glucuronate + H(+). Inhibited by palmostatin-B. Acts as an acyl-protein thioesterase that hydrolyzes fatty acids from acylated residues in proteins. Regulates the mitochondrial S-depalmitoylation of the nucleophilic active site residue of peroxiredoxin-5/PRDX5, a key antioxidant protein, therefore modulating mitochondrial antioxidant ability. Also catalyzes the deglucuronidation of mycophenolic acid acyl-glucuronide, an active metabolite of the immunosuppressant drug mycophenolate. In Pongo abelii (Sumatran orangutan), this protein is Palmitoyl-protein thioesterase ABHD10, mitochondrial (ABHD10).